Here is a 392-residue protein sequence, read N- to C-terminus: MDDKKNEDLEMRNFNGRSSPSQRDPFLAKPGAAAKRGNSAFDLSNVTNSPGISILAYCLASISMTVTNKYCVSGSNWNLNFFYLAIQSVVCIIAIIICKQAGLITNLAPFDTKKAKTWFPISLLLVGMIYTSTKALQFLSVPVYTIFKNLTIIVIAYGEVLWFGGSVTPSALFSFGLMVLSSVVAAWADIQHALYGGGAAQSAEAAAALSTLNAGYAWMGMNVFCTAAYVLSMRKVIKKMNFKDWDTMFYNNLLTIPVLFVCSFIFENWSSENLTKNFPLETRNNLILGMIYSGLATIFISYCSAWCIRVTSSTTYSMVGALNKLPIAVSGLVFFAAPVTFGSVSAIFIGFVSGIVYAWAKVRQNQSKGNILPTTQPVMSASSQSNRDAAKA.

A compositionally biased stretch (basic and acidic residues) spans 1 to 11; it reads MDDKKNEDLEM. The interval 1-25 is disordered; sequence MDDKKNEDLEMRNFNGRSSPSQRDP. Residues 1 to 45 are Cytoplasmic-facing; it reads MDDKKNEDLEMRNFNGRSSPSQRDPFLAKPGAAAKRGNSAFDLSN. A helical membrane pass occupies residues 46 to 66; the sequence is VTNSPGISILAYCLASISMTV. Topologically, residues 67–76 are lumenal; the sequence is TNKYCVSGSN. Residues 77 to 97 traverse the membrane as a helical segment; it reads WNLNFFYLAIQSVVCIIAIII. Residues 98–116 lie on the Cytoplasmic side of the membrane; it reads CKQAGLITNLAPFDTKKAK. Residues 117–139 form a helical membrane-spanning segment; it reads TWFPISLLLVGMIYTSTKALQFL. The Lumenal segment spans residues 140-142; it reads SVP. A helical transmembrane segment spans residues 143–165; the sequence is VYTIFKNLTIIVIAYGEVLWFGG. Over 166-171 the chain is Cytoplasmic; that stretch reads SVTPSA. Residues 172-191 form a helical membrane-spanning segment; it reads LFSFGLMVLSSVVAAWADIQ. At 192-210 the chain is on the lumenal side; it reads HALYGGGAAQSAEAAAALS. A helical membrane pass occupies residues 211 to 231; that stretch reads TLNAGYAWMGMNVFCTAAYVL. At 232-246 the chain is on the cytoplasmic side; sequence SMRKVIKKMNFKDWD. Residues 247-267 traverse the membrane as a helical segment; the sequence is TMFYNNLLTIPVLFVCSFIFE. Residues asparagine 268 and asparagine 273 are each glycosylated (N-linked (GlcNAc...) asparagine). Residues 268–285 are Lumenal-facing; the sequence is NWSSENLTKNFPLETRNN. Residues 286 to 306 traverse the membrane as a helical segment; the sequence is LILGMIYSGLATIFISYCSAW. Residues 307 to 314 lie on the Cytoplasmic side of the membrane; the sequence is CIRVTSST. A helical membrane pass occupies residues 315–337; the sequence is TYSMVGALNKLPIAVSGLVFFAA. Over 338–340 the chain is Lumenal; it reads PVT. The chain crosses the membrane as a helical span at residues 341–360; that stretch reads FGSVSAIFIGFVSGIVYAWA. Over 361-392 the chain is Cytoplasmic; that stretch reads KVRQNQSKGNILPTTQPVMSASSQSNRDAAKA. Residues 373 to 392 are disordered; it reads PTTQPVMSASSQSNRDAAKA.

It belongs to the TPT transporter family. SLC35D subfamily. Homooligomer.

Its subcellular location is the golgi apparatus membrane. It is found in the cytoplasmic vesicle membrane. It localises to the endoplasmic reticulum membrane. Its function is as follows. Involved in the import of GDP-mannose from the cytoplasm into the Golgi lumen. The chain is GDP-mannose transporter (gmt1) from Botryotinia fuckeliana (strain B05.10) (Noble rot fungus).